A 404-amino-acid chain; its full sequence is Multidrug resistance protein MdtG (404 aa).

11 consecutive transmembrane segments (helical) span residues 19–39 (LGCF…PLYV), 56–76 (LVFS…GGLA), 90–110 (LGMA…QFLI), 113–133 (ALLG…ATQV), 144–164 (TLST…GLLA), 171–191 (PVFF…FFFI), 222–242 (LFVT…ILTL), 254–274 (IAFI…LSAP), 288–308 (ILIV…FVQT), 317–337 (FLLG…LVYN), and 376–396 (AVFC…WNSL).

The protein belongs to the major facilitator superfamily. DHA1 family. MdtG (TC 2.A.1.2.20) subfamily.

The protein resides in the cell inner membrane. This chain is Multidrug resistance protein MdtG, found in Salmonella heidelberg (strain SL476).